Here is a 201-residue protein sequence, read N- to C-terminus: Translation machinery-associated protein 22 (201 aa).

The 72-residue stretch at 104–175 folds into the SUI1 domain; sequence VTVKRIERNK…EIKEFIVEKY (72 aa).

It belongs to the DENR family. In terms of assembly, interacts with the 40S ribosomal subunit.

Its subcellular location is the cytoplasm. The protein is Translation machinery-associated protein 22 (TMA22) of Pyricularia oryzae (strain 70-15 / ATCC MYA-4617 / FGSC 8958) (Rice blast fungus).